We begin with the raw amino-acid sequence, 89 residues long: Putative defensin-like protein 230 (89 aa).

An N-terminal signal peptide occupies residues M1–A26. Cystine bridges form between C30-C84, C40-C65, C48-C78, and C63-C80.

The protein belongs to the DEFL family.

The protein localises to the secreted. The chain is Putative defensin-like protein 230 (SCRL24) from Arabidopsis thaliana (Mouse-ear cress).